The chain runs to 219 residues: Cytidylate kinase (219 aa).

10-18 (GPAAAGKST) contributes to the ATP binding site.

The protein belongs to the cytidylate kinase family. Type 1 subfamily.

Its subcellular location is the cytoplasm. The catalysed reaction is CMP + ATP = CDP + ADP. The enzyme catalyses dCMP + ATP = dCDP + ADP. The polypeptide is Cytidylate kinase (Staphylococcus saprophyticus subsp. saprophyticus (strain ATCC 15305 / DSM 20229 / NCIMB 8711 / NCTC 7292 / S-41)).